A 515-amino-acid polypeptide reads, in one-letter code: ATP synthase subunit alpha (515 aa).

ATP is bound at residue 169 to 176 (GDRQTGKT).

This sequence belongs to the ATPase alpha/beta chains family. In terms of assembly, F-type ATPases have 2 components, CF(1) - the catalytic core - and CF(0) - the membrane proton channel. CF(1) has five subunits: alpha(3), beta(3), gamma(1), delta(1), epsilon(1). CF(0) has three main subunits: a(1), b(2) and c(9-12). The alpha and beta chains form an alternating ring which encloses part of the gamma chain. CF(1) is attached to CF(0) by a central stalk formed by the gamma and epsilon chains, while a peripheral stalk is formed by the delta and b chains.

The protein resides in the cell inner membrane. It catalyses the reaction ATP + H2O + 4 H(+)(in) = ADP + phosphate + 5 H(+)(out). In terms of biological role, produces ATP from ADP in the presence of a proton gradient across the membrane. The alpha chain is a regulatory subunit. The protein is ATP synthase subunit alpha of Myxococcus xanthus.